The primary structure comprises 152 residues: MSTINTDANEAMPHISVNAQYIKDLSLENPDAPSSLAALEHRPQIDLSLDINITNLSEENFYEVELNIEAVARNEKYKLFQVELKYAGVFNLINIAPEQHQILLSVHCPAMIFPFARKIIASCTQDAGFQPLMIDPIDFGALYHKKMSEHQN.

It belongs to the SecB family. Homotetramer, a dimer of dimers. One homotetramer interacts with 1 SecA dimer.

The protein localises to the cytoplasm. Functionally, one of the proteins required for the normal export of preproteins out of the cell cytoplasm. It is a molecular chaperone that binds to a subset of precursor proteins, maintaining them in a translocation-competent state. It also specifically binds to its receptor SecA. The chain is Protein-export protein SecB from Rickettsia bellii (strain RML369-C).